The chain runs to 270 residues: 3-methyl-2-oxobutanoate hydroxymethyltransferase (270 aa).

The Mg(2+) site is built by Asp-43 and Asp-82. Residues 43-44, Asp-82, and Lys-112 each bind 3-methyl-2-oxobutanoate; that span reads DS. Residue Glu-114 coordinates Mg(2+). Glu-179 (proton acceptor) is an active-site residue.

It belongs to the PanB family. As to quaternary structure, homodecamer; pentamer of dimers. The cofactor is Mg(2+).

The protein localises to the cytoplasm. It catalyses the reaction 3-methyl-2-oxobutanoate + (6R)-5,10-methylene-5,6,7,8-tetrahydrofolate + H2O = 2-dehydropantoate + (6S)-5,6,7,8-tetrahydrofolate. It functions in the pathway cofactor biosynthesis; (R)-pantothenate biosynthesis; (R)-pantoate from 3-methyl-2-oxobutanoate: step 1/2. Catalyzes the reversible reaction in which hydroxymethyl group from 5,10-methylenetetrahydrofolate is transferred onto alpha-ketoisovalerate to form ketopantoate. This Oceanobacillus iheyensis (strain DSM 14371 / CIP 107618 / JCM 11309 / KCTC 3954 / HTE831) protein is 3-methyl-2-oxobutanoate hydroxymethyltransferase.